A 139-amino-acid chain; its full sequence is Small ribosomal subunit protein uS9 (139 aa).

This sequence belongs to the universal ribosomal protein uS9 family.

In Coxiella burnetii (strain CbuG_Q212) (Coxiella burnetii (strain Q212)), this protein is Small ribosomal subunit protein uS9.